A 1071-amino-acid chain; its full sequence is Nonribosomal peptide synthetase flvI (1071 aa).

The segment at 33-417 (RRVLEQHDAP…GSLHFISRKD (385 aa)) is adenylation. The region spanning 552 to 628 (MPLTEIELKM…MLCQNIKTDV (77 aa)) is the Carrier domain. Ser-589 carries the post-translational modification O-(pantetheine 4'-phosphoryl)serine. The tract at residues 689-961 (NYTLRLEFKL…IDDRDIEQLS (273 aa)) is condensation.

The protein belongs to the NRP synthetase family.

The catalysed reaction is (2S)-5,5-dimethylpiperidine-2-carboxylate + 10-hydroxy-pre-flavunoidine + ATP = flavunoidine + AMP + diphosphate + H(+). Its pathway is secondary metabolite biosynthesis; terpenoid biosynthesis. In terms of biological role, nonribosomal peptide synthetase; part of the gene cluster that mediates the biosynthesis of flavunoidine, an alkaloidal terpenoid with a tetracyclic cage-like core connected to dimethylcadaverine via a C-N bond and acylated with 5,5-dimethyl-L-pipecolate. The tetracyclic core is synthesized by the terpene cyclase flvE and the cytochrome P450 monooxygenase flvD. The terpene cyclase flvE catalyzes the cyclization of farnesyl pyrophosphate (FPP) to form (1R,4R,5S)-(+)-acoradiene and the cytochrome P450 monooxygenase flvD is then responsible for oxidative conversion of (1R,4R,5S)-(+)-acoradiene into the tetracyclic cage present in the final product flavunoidine. In parallel, the N-methyltransferase flvH dimethylates L-lysine to give N,N-dimethyl-L-Lysin which is decarboxylated by flvG to afford dimethylcadaverine. The terpene cyclase-like protein flvF is the enzyme that attaches the dimethylcadaverine precusor at the C-7 of the tetracyclic cage to yield pre-flavunoidine. The cytochrome monooxygenase flvC hydroxylates the C-10 position of pre-flavunoidine whereas the NRPS flvI acylates the terpenoid core at the hydroxylated C-10 with dimethylpipecolate to yield final flavunoidine. The bifunctional enzyme flvA and the dehydrogenase flvB are responsible for the synthesis of the dimethylpipecolate precursor. The PLP-dependent lyase domain of flvA might use L-O-acetyl-homoserine and alpha-keto-isovalerate to form an intermediary ketone that can cyclize intramolecularly to yield an imine. The imine can be reduced by flvB to yield the 6-carboxylated pipecolate. The C-terminal alpha-KG-dependent oxygenase domain of flvA is then proposed to catalyze the decarboxylation to yield dimethylpipecolate. This chain is Nonribosomal peptide synthetase flvI, found in Aspergillus flavus (strain ATCC 200026 / FGSC A1120 / IAM 13836 / NRRL 3357 / JCM 12722 / SRRC 167).